A 669-amino-acid chain; its full sequence is Diacylglycerol lipase-beta (669 aa).

Topologically, residues 1-17 (MPGMVLFGRRWSLASDD) are cytoplasmic. A helical transmembrane segment spans residues 18 to 38 (LVFPGSFELFLRVLWWIVSLT). Topologically, residues 39–58 (LYLTHRRRLDCPGGVLLSTY) are extracellular. The chain crosses the membrane as a helical span at residues 59–79 (LIVLLVLLAVIICTVLAIVCV). Over 80–102 (SMRGTICNPGPRKSMSKLLYIRL) the chain is Cytoplasmic. The helical transmembrane segment at 103–123 (ALFLPEMVWASLGAAWVAKGI) threads the bilayer. The Extracellular segment spans residues 124 to 128 (QCDRT). The chain crosses the membrane as a helical span at residues 129–149 (VVIGIIATVIVSWIVIAATMV). The Cytoplasmic portion of the chain corresponds to 150-669 (TIIFVFDPLG…CPGQGGSSVP (520 aa)). Catalysis depends on charge relay system residues S443 and D495. S570, S578, and S582 each carry phosphoserine.

The protein belongs to the AB hydrolase superfamily. Lipase family. It depends on Ca(2+) as a cofactor. As to expression, expressed in liver and immune cells such as macrophages and microglias. In embryonic brains present in axonal tracts, while in adults localizes to dendritic fields, correlating with the developmental change in requirement for 2-AG synthesis from the pre- to the postsynaptic compartment (at protein level).

The protein resides in the cell membrane. It catalyses the reaction a 1,2-diacyl-sn-glycerol + H2O = a 2-acylglycerol + a fatty acid + H(+). It carries out the reaction 1-octadecanoyl-2-(5Z,8Z,11Z,14Z-eicosatetraenoyl)-sn-glycerol + H2O = 2-(5Z,8Z,11Z,14Z-eicosatetraenoyl)-glycerol + octadecanoate + H(+). The enzyme catalyses 1,2-di-(9Z-octadecenoyl)-sn-glycerol + H2O = 2-(9Z-octadecenoyl)-glycerol + (9Z)-octadecenoate + H(+). The catalysed reaction is 1-(9Z-octadecenoyl)-2-(5Z,8Z,11Z,14Z-eicosatetraenoyl)-sn-glycerol + H2O = 2-(5Z,8Z,11Z,14Z-eicosatetraenoyl)-glycerol + (9Z)-octadecenoate + H(+). It catalyses the reaction 1-(9Z-octadecenoyl)-2-octadecanoyl-sn-glycerol + H2O = 2-octadecanoylglycerol + (9Z)-octadecenoate + H(+). It carries out the reaction 1-(9Z-octadecenoyl)-2-(9Z,12Z-octadecadienoyl)-sn-glycerol + H2O = 2-(9Z,12Z-octadecadienoyl)-glycerol + (9Z)-octadecenoate + H(+). The enzyme catalyses 1-(9Z-octadecenoyl)-2-O-(5Z,8Z,11Z,14Z-eicosatetraenyl)-sn-glycerol + H2O = 2-O-(5Z,8Z,11Z,14Z)-eicosatetraenylglycerol + (9Z)-octadecenoate + H(+). The catalysed reaction is a triacylglycerol + H2O = a diacylglycerol + a fatty acid + H(+). It catalyses the reaction 1,2,3-tri-(5Z,8Z,11Z,14Z-eicosatetraenoyl)-glycerol + H2O = 1,2-di-(5Z,8Z,11Z,14Z-eicosatetraenoyl)-glycerol + (5Z,8Z,11Z,14Z)-eicosatetraenoate + H(+). It carries out the reaction 1,2,3-(4Z,7Z,10Z,13Z,16Z,19Z-docosahexaenoyl)-glycerol + H2O = 1,2-di-(4Z,7Z,10Z,13Z,16Z,19Z-docosahexaenoyl)-glycerol + (4Z,7Z,10Z,13Z,16Z,19Z)-docosahexaenoate + H(+). Its activity is regulated as follows. Inhibited by the 1,2,3-triazole urea covalent inhibitors KT109 and KT172. Inhibited by p-hydroxy-mercuri-benzoate and HgCl(2), but not by PMSF. Also inhibited by RHC80267, a drug that blocks 2-AG formation. Its function is as follows. Lipase that catalyzes the hydrolysis of arachidonic acid (AA)-esterified diacylglycerols (DAGs) to produce the principal endocannabinoid, 2-arachidonoylglycerol (2-AG) which can be further cleaved by downstream enzymes to release arachidonic acid (AA) for cyclooxygenase (COX)-mediated eicosanoid production. Preferentially hydrolyzes DAGs at the sn-1 position in a calcium-dependent manner and has negligible activity against other lipids including monoacylglycerols and phospholipids. Plays a key role in the regulation of 2-AG and AA pools utilized by COX1/2 to generate lipid mediators of macrophage and microglia inflammatory responses. Also functions as a polyunsaturated fatty acids-specific triacylglycerol lipase in macrophages. Plays an important role to support the metabolic and signaling demands of macrophages. The chain is Diacylglycerol lipase-beta (Daglb) from Mus musculus (Mouse).